Here is a 176-residue protein sequence, read N- to C-terminus: MDLPGPIHDFLLVFLGSGLLFGSLGVVLFPNPIFSAFSLGFVLVCISLLYILSNSHFVAAAQLLIYVGAITVLIIFAVMFMNDSEYSTDLNRWTVGDGITSVICTTILFSLISTILDTSWYGVIWTTRLNQILEQDLISNSQQIGIHLSTDFFLPFELISIILLVALIGAISVARQ.

Helical transmembrane passes span 10–30 (FLLV…VLFP), 32–52 (PIFS…LYIL), 61–81 (AQLL…VMFM), 95–115 (VGDG…ISTI), and 152–172 (FFLP…GAIS).

It belongs to the complex I subunit 6 family. As to quaternary structure, NDH is composed of at least 16 different subunits, 5 of which are encoded in the nucleus.

Its subcellular location is the plastid. It localises to the chloroplast thylakoid membrane. The enzyme catalyses a plastoquinone + NADH + (n+1) H(+)(in) = a plastoquinol + NAD(+) + n H(+)(out). The catalysed reaction is a plastoquinone + NADPH + (n+1) H(+)(in) = a plastoquinol + NADP(+) + n H(+)(out). NDH shuttles electrons from NAD(P)H:plastoquinone, via FMN and iron-sulfur (Fe-S) centers, to quinones in the photosynthetic chain and possibly in a chloroplast respiratory chain. The immediate electron acceptor for the enzyme in this species is believed to be plastoquinone. Couples the redox reaction to proton translocation, and thus conserves the redox energy in a proton gradient. This Aethionema cordifolium (Lebanon stonecress) protein is NAD(P)H-quinone oxidoreductase subunit 6, chloroplastic (ndhG).